A 209-amino-acid polypeptide reads, in one-letter code: MLDFYYLPGSAPCRAVQMVAEAVHVKLNLKYLDLMAGAHRSPQFTKLNPQRTIPTLVDGSLILSESRAALIYLCDQYGDEDNDWYPRDTIQRAIVNQRLFFDACVLYPRFADFYHPQVFGNAAPDGRKRLAFEKAVELLNIFLSEHEFVAGSKMTIADISLFATLATACTLGFILRPYVHVDRWYVTMVASCPGAQANVSGAKEFLTYK.

Residues methionine 1 to aspartate 81 form the GST N-terminal domain. Residues serine 10, arginine 51–isoleucine 53, and glutamate 65–arginine 67 contribute to the glutathione site. The region spanning aspartate 88–lysine 209 is the GST C-terminal domain.

This sequence belongs to the GST superfamily. Theta family. In terms of assembly, homodimer.

The enzyme catalyses RX + glutathione = an S-substituted glutathione + a halide anion + H(+). Its function is as follows. Conjugation of reduced glutathione to a wide number of exogenous and endogenous hydrophobic electrophiles. This Anopheles gambiae (African malaria mosquito) protein is Glutathione S-transferase 2 (GstD2).